The chain runs to 118 residues: Sporulation protein YjcA (118 aa).

3 helical membrane-spanning segments follow: residues 8–28 (IVLL…DTIM), 62–82 (FIGE…GFLI), and 92–112 (AQWL…ETLV).

Belongs to the UPF0713 family.

The protein resides in the cell membrane. Involved in sporulation. The chain is Sporulation protein YjcA (yjcA) from Bacillus subtilis (strain 168).